The chain runs to 467 residues: UBX domain-containing protein 7 (467 aa).

At Ala-2 the chain carries N-acetylalanine. The 53-residue stretch at 2–54 folds into the UBA domain; that stretch reads AAHGGSAASSALKGLIQQFTAITGASESVGKHMLEACNNNLEMAVTMFLDGGG. A disordered region spans residues 57–77; the sequence is EEPSTSSASVSTVRPHTEEEV. The span at 59–70 shows a compositional bias: polar residues; the sequence is PSTSSASVSTVR. Residues Lys-84 and Lys-112 each participate in a glycyl lysine isopeptide (Lys-Gly) (interchain with G-Cter in SUMO2) cross-link. The segment at 240–260 is disordered; sequence GQLDGLSSSPPKKCARSESLI. A phosphoserine mark is found at Ser-256, Ser-258, Ser-263, and Ser-266. The ubiquitin-interacting motif (UIM) repeat unit spans residues 263-282; that stretch reads SEDSQLEAAIRASLQETHFD. The tract at residues 281 to 364 is disordered; the sequence is FDSAQAKQDS…TATNHQGLPS (84 aa). The segment covering 330–344 has biased composition (basic and acidic residues); the sequence is HKDLGHRKEENRRPL. Ser-373 carries the phosphoserine modification. A UBX domain is found at 386–463; the sequence is VNGPKAQLML…GLCPQETVFV (78 aa).

Interacts with neddylated CUL2, ubiquitinated HIF1A, and VCP/p97.

The protein resides in the nucleus. In terms of biological role, ubiquitin-binding adapter that links a subset of NEDD8-associated cullin ring ligases (CRLs) to the segregase VCP/p97, to regulate turnover of their ubiquitination substrates. The polypeptide is UBX domain-containing protein 7 (Ubxn7) (Mus musculus (Mouse)).